The sequence spans 406 residues: Transcriptional activator NprA (406 aa).

4 TPR repeats span residues Y125–Q158, A206–I239, G246–S279, and F285–E318.

Functionally, activates the transcription of nprS by about five fold. May bind to the upstream region of nprS promoter. The chain is Transcriptional activator NprA (nprA) from Geobacillus stearothermophilus (Bacillus stearothermophilus).